The sequence spans 691 residues: NADPH--cytochrome P450 reductase (691 aa).

Residues Pro2–Asn7 are Lumenal-facing. Residues Thr8 to Val24 form a helical membrane-spanning segment. Residues Lys25–Trp691 lie on the Cytoplasmic side of the membrane. In terms of domain architecture, Flavodoxin-like spans Tyr61 to Leu204. Residues Ser67–Ala72, Lys78, Ser116–Gly119, Leu152–Asn161, and Asp187 each bind FMN. One can recognise an FAD-binding FR-type domain in the interval Ser266–Pro529. Residue Arg285 coordinates NADP(+). FAD is bound by residues Arg439–Ser442, Thr457–Ile459, and Gly476–Thr479. Residues Thr543, Ser610–Arg611, Lys617–Gln621, and Asp646 contribute to the NADP(+) site. Residue Lys666 forms a Glycyl lysine isopeptide (Lys-Gly) (interchain with G-Cter in ubiquitin) linkage. Trp691 lines the FAD pocket.

It belongs to the NADPH--cytochrome P450 reductase family. The protein in the N-terminal section; belongs to the flavodoxin family. This sequence in the C-terminal section; belongs to the flavoprotein pyridine nucleotide cytochrome reductase family. Interacts with PCL1. It depends on FAD as a cofactor. FMN is required as a cofactor. Post-translationally, phosphorylated by the cyclin-CDK PCL1-PHO85.

It localises to the endoplasmic reticulum membrane. It is found in the mitochondrion outer membrane. The protein localises to the cell membrane. It catalyses the reaction 2 oxidized [cytochrome P450] + NADPH = 2 reduced [cytochrome P450] + NADP(+) + H(+). This enzyme is required for electron transfer from NADP to cytochrome P450 in microsomes. It can also provide electron transfer to heme oxygenase and cytochrome B5. Involved in ergosterol biosynthesis. Has NADPH-dependent ferrireductase activity on the plasma membrane. This Saccharomyces cerevisiae (strain ATCC 204508 / S288c) (Baker's yeast) protein is NADPH--cytochrome P450 reductase.